A 214-amino-acid polypeptide reads, in one-letter code: DNA-binding protein HupB (214 aa).

Lys-3 carries the N6-acetyllysine modification. Residue Lys-3 is modified to N6-succinyllysine. 2 positions are modified to phosphothreonine: Thr-43 and Thr-45. N6-acetyllysine is present on residues Lys-72, Lys-86, and Lys-103. The interval 100-214 (PAVKRGVGAS…KKATARRGRK (115 aa)) is disordered. A compositionally biased stretch (low complexity) spans 102 to 112 (VKRGVGASAAK). Lys-113 is modified (N6-succinyllysine). The span at 113–214 (KVAKKAPAKK…KKATARRGRK (102 aa)) shows a compositional bias: basic residues. N6-acetyllysine is present on residues Lys-116 and Lys-133. At Lys-142 the chain carries N6-succinyllysine. Lys-146 and Lys-167 each carry N6-acetyllysine.

It belongs to the bacterial histone-like protein family. Long actinobacterial subfamily. As to quaternary structure, oligomerizes. Homodimer; the crystallized protein is missing the C-terminal 105 residues. Interacts with topoisomerase 1 (topA). Interacts with Eis. Interacts with NAD-dependent protein deacylase NPD (MRA_1161). Interacts with MRA_0812 CoA transferase. In terms of processing, phosphorylated in vivo on Ser and Thr-residues; the protein is degraded during purification so most sites were not identified, but at least one of Thr-43 and/or Thr-45 are modified in vivo. In vitro at least PknE, PknF and PknB phosphorylate HupB; PknE is the most active and phosphorylates many sites in vitro including Thr-43 and Thr-45. Post-translationally, acetylated on 8 Lys residues in vivo (probably by Eis). In vitro acetylated by Eis on 28 residues (strains H37Rv and H37Ra), many more than those identified in vivo. Also acetylated by MRA_0812. Deacetylated in vitro by NAD-dependent protein deacylase NPD (MRA_1161). Succinylated in vivo and in vitro by MRA_0812 and by Eis; only 3 residues are found to be succinylated in vivo, while 27 are modifed in vitro by MRA_0812 and 32 are succinylated by Eis. NAD-dependent protein deacylase (MRA_1161) desuccinylates this protein.

It localises to the cytoplasm. Its subcellular location is the nucleoid. It carries out the reaction 4 Fe(2+) + O2 + 4 H(+) = 4 Fe(3+) + 2 H2O. Two trans-stilbene derivatives, 4,4'-[(E)-ethene-1,2 diylbis({5[(phenylcarbonyl)amino]benzene-2,1-diyl}sulfonylimino)] dibenzoic acid and its methoxy derivative 4,4'-[1,2-ethenediylbis({5-[(4-methoxybenzoyl)amino]-2,1phenylene}sulfonylimino)] dibenzoic acid, respectively SD1 and SD4, inhibit DNA binding with 50% inhibition at 20 uM for SD1 and 1.7 uM for SD4. SD1 and SD4 have minimal inhibitory concentrations of 400 and 800 uM on strain H37Ra respectively. In terms of biological role, a nucleoid-associated protein (NAP) that plays a role in local chromosome architecture. Binds DNA non-sequence specifically; in vitro phosphorylation of an N-terminal fragment decreases DNA-binding. Stimulates supercoiling relaxation by topoisomerase 1 (Top1, topA), at higher than 80 uM inhibits relaxation, has no effect on DNA gyrase; the effect is independent of DNA-binding. Increases the intervening strand passage activity of Top1 that occurs between the two catalytic trans-esterification reactions. Does not bind ssDNA, probably helps condense chromosomes. Binds dsDNA; in vitro acetylated protein binds 10-fold less well to DNA (note in vitro acetylated protein is more heavily modified than in vivo modified protein). In vitro acetylated protein compacts DNA less well than unmodified protein. In vitro succinylated DNA bind dsDNA less well than unmodified protein (note in vitro succinylated protein is more heavily modified than in vivo modified protein). Functionally, has ferroxidase activity, converts Fe(2+) into Fe(3+). Binds Fe(3+) but not Fe(2+); prevents the generation of hydroxyl radicals by the Fenton reaction and thus protects DNA from damage. May function in iron storage. Its function is as follows. Required for biofilm formation; trimethylation by recombinant human SUV39H1 (a histone methyltransferase) inhibits biofilm formation. Probably influences transcription. RNase E and HupB jointly contribute to cellular adaptation to changing growth conditions and survival during antibiotic treatment and in the host. In Mycobacterium tuberculosis (strain ATCC 25177 / H37Ra), this protein is DNA-binding protein HupB.